We begin with the raw amino-acid sequence, 537 residues long: Chaperonin GroEL (537 aa).

ATP-binding positions include Thr30 to Pro33, Asp87 to Thr91, Gly414, Asp477 to Val479, and Asp493.

Belongs to the chaperonin (HSP60) family. Forms a cylinder of 14 subunits composed of two heptameric rings stacked back-to-back. Interacts with the co-chaperonin GroES.

It localises to the cytoplasm. It carries out the reaction ATP + H2O + a folded polypeptide = ADP + phosphate + an unfolded polypeptide.. Together with its co-chaperonin GroES, plays an essential role in assisting protein folding. The GroEL-GroES system forms a nano-cage that allows encapsulation of the non-native substrate proteins and provides a physical environment optimized to promote and accelerate protein folding. This is Chaperonin GroEL from Coprothermobacter proteolyticus (strain ATCC 35245 / DSM 5265 / OCM 4 / BT).